We begin with the raw amino-acid sequence, 286 residues long: MNNDILHRYIFDNADVRGEIVQLESSYQEVLSAHIYPVALQALIGELLAATSLLTATIKFSGDISVQLQGDGPVSLAVINGNNKQVLRGVARWNGDIAADASLQQMFGKGYMVITLTPDEGERYQGIVSLDHVNLAACLEEYFNQSEQLPTQIQLFANGKQAAGMLLQVLPAKSGNNDDFEHLSALTSTIKAEELFTLDAEQVLHRLYHQEEVRLFDPVDVTFKCSCSRDRSAAAIKTLPQTEVEEILAEEGKIEMDCEYCTAKYSFDAIDIAALYSGSHSSQSQQ.

2 disulfide bridges follow: Cys-225–Cys-227 and Cys-258–Cys-261.

This sequence belongs to the HSP33 family. Under oxidizing conditions two disulfide bonds are formed involving the reactive cysteines. Under reducing conditions zinc is bound to the reactive cysteines and the protein is inactive.

It is found in the cytoplasm. Redox regulated molecular chaperone. Protects both thermally unfolding and oxidatively damaged proteins from irreversible aggregation. Plays an important role in the bacterial defense system toward oxidative stress. The sequence is that of 33 kDa chaperonin from Shewanella frigidimarina (strain NCIMB 400).